The following is a 469-amino-acid chain: Glutamate--tRNA ligase (469 aa).

The 'HIGH' region motif lies at 11–21 (PSPTGFIHLGN). Residues 243-247 (KMSKR) carry the 'KMSKS' region motif. Lys246 is an ATP binding site.

It belongs to the class-I aminoacyl-tRNA synthetase family. Glutamate--tRNA ligase type 1 subfamily. As to quaternary structure, monomer.

The protein localises to the cytoplasm. It carries out the reaction tRNA(Glu) + L-glutamate + ATP = L-glutamyl-tRNA(Glu) + AMP + diphosphate. Its function is as follows. Catalyzes the attachment of glutamate to tRNA(Glu) in a two-step reaction: glutamate is first activated by ATP to form Glu-AMP and then transferred to the acceptor end of tRNA(Glu). In Burkholderia ambifaria (strain MC40-6), this protein is Glutamate--tRNA ligase.